Consider the following 311-residue polypeptide: Aspartate carbamoyltransferase catalytic subunit (311 aa).

2 residues coordinate carbamoyl phosphate: Arg58 and Thr59. An L-aspartate-binding site is contributed by Lys86. 3 residues coordinate carbamoyl phosphate: Arg108, His136, and Gln139. 2 residues coordinate L-aspartate: Arg169 and Arg224. Gly265 and Pro266 together coordinate carbamoyl phosphate.

It belongs to the aspartate/ornithine carbamoyltransferase superfamily. ATCase family. Heterododecamer (2C3:3R2) of six catalytic PyrB chains organized as two trimers (C3), and six regulatory PyrI chains organized as three dimers (R2).

The catalysed reaction is carbamoyl phosphate + L-aspartate = N-carbamoyl-L-aspartate + phosphate + H(+). Its pathway is pyrimidine metabolism; UMP biosynthesis via de novo pathway; (S)-dihydroorotate from bicarbonate: step 2/3. Functionally, catalyzes the condensation of carbamoyl phosphate and aspartate to form carbamoyl aspartate and inorganic phosphate, the committed step in the de novo pyrimidine nucleotide biosynthesis pathway. This is Aspartate carbamoyltransferase catalytic subunit from Geotalea uraniireducens (strain Rf4) (Geobacter uraniireducens).